The sequence spans 365 residues: ADP-ribosylhydrolase ARH3 (365 aa).

Residues glutamate 42, threonine 77, aspartate 78, and aspartate 79 each contribute to the Mg(2+) site. Aspartate 78 contributes to the substrate binding site. Residues 147–153, histidine 183, leucine 236, and isoleucine 272 each bind substrate; that span reads KGSYGNG. Mg(2+) contacts are provided by aspartate 315, aspartate 317, and threonine 318.

Belongs to the ADP-ribosylglycohydrolase family. As to quaternary structure, monomer. It depends on Mg(2+) as a cofactor.

The protein localises to the nucleus. It localises to the cytoplasm. The protein resides in the chromosome. Its subcellular location is the mitochondrion matrix. The enzyme catalyses [(1''-&gt;2')-ADP-alpha-D-ribose](n) + H2O = [(1''-&gt;2')-ADP-alpha-D-ribose](n-1) + ADP-D-ribose. It catalyses the reaction 1''-O-acetyl-ADP-alpha-D-ribose + H2O = ADP-D-ribose + acetate + H(+). It carries out the reaction O-(ADP-D-ribosyl)-L-seryl-[protein] + H2O = ADP-D-ribose + L-seryl-[protein]. The catalysed reaction is alpha-NAD(+) + H2O = ADP-D-ribose + nicotinamide + H(+). Its activity is regulated as follows. The protein undergoes a dramatic conformational switch from closed to open states upon substrate-binding, which enables specific substrate recognition for the 1''-O-linkage. The glutamate flap (Glu-42) blocks substrate entrance to Mg(2+) in the unliganded closed state. In presence of substrate, Glu-42 is ejected from the active site: this closed-to-open transition significantly widens the substrate-binding channel and precisely positions the scissile 1''-O-linkage for cleavage while securing tightly 2'- and 3'-hydroxyls of ADP-ribose. ADP-ribosylhydrolase that preferentially hydrolyzes the scissile alpha-O-linkage attached to the anomeric C1'' position of ADP-ribose and acts on different substrates, such as proteins ADP-ribosylated on serine and threonine, free poly(ADP-ribose) and O-acetyl-ADP-D-ribose. Specifically acts as a serine mono-ADP-ribosylhydrolase by mediating the removal of mono-ADP-ribose attached to serine residues on proteins, thereby playing a key role in DNA damage response. Serine ADP-ribosylation of proteins constitutes the primary form of ADP-ribosylation of proteins in response to DNA damage. Does not hydrolyze ADP-ribosyl-arginine, -cysteine, -diphthamide, or -asparagine bonds. Also able to degrade protein free poly(ADP-ribose), which is synthesized in response to DNA damage: free poly(ADP-ribose) acts as a potent cell death signal and its degradation by ADPRHL2 protects cells from poly(ADP-ribose)-dependent cell death, a process named parthanatos. Also hydrolyzes free poly(ADP-ribose) in mitochondria. Specifically digests O-acetyl-ADP-D-ribose, a product of deacetylation reactions catalyzed by sirtuins. Specifically degrades 1''-O-acetyl-ADP-D-ribose isomer, rather than 2''-O-acetyl-ADP-D-ribose or 3''-O-acetyl-ADP-D-ribose isomers. The chain is ADP-ribosylhydrolase ARH3 (ADPRS) from Bos taurus (Bovine).